Consider the following 499-residue polypeptide: Maturase K (499 aa).

This sequence belongs to the intron maturase 2 family. MatK subfamily.

The protein localises to the plastid. Its subcellular location is the chloroplast. Functionally, usually encoded in the trnK tRNA gene intron. Probably assists in splicing its own and other chloroplast group II introns. The sequence is that of Maturase K from Gymnocladus chinensis (Soap tree).